The following is a 256-amino-acid chain: MQTETIHNIPYVNSNLTSFIDYLEKHYIDQKIGAVISTVNPEIAFAAIKDRDYFDVLSSSNFILPDGIGVVMMSRLTNNRLQSRIAGYDVFKELLGVANKKKKRIFLYGAKKDVIKGVVSKISSEYPNIKIAGYSDGYVQDRTLVAKQIARANPDMVFVALGYPHQEKFIHNYRHLFPKAVSIGLGGSFDVFSGNVKRAPSWMIRLNLEWFYRLILNPWRWKRMLSIPKYALTVLKEEKNKKTFYPKPEKDHTKQI.

The protein belongs to the glycosyltransferase 26 family. TagA/TarA subfamily.

It catalyses the reaction UDP-N-acetyl-alpha-D-mannosamine + N-acetyl-alpha-D-glucosaminyl-di-trans,octa-cis-undecaprenyl diphosphate = N-acetyl-beta-D-mannosaminyl-(1-&gt;4)-N-acetyl-alpha-D-glucosaminyl di-trans,octa-cis-undecaprenyl diphosphate + UDP + H(+). The protein operates within cell wall biogenesis; poly(glycerol phosphate) teichoic acid biosynthesis. Catalyzes the conversion of GlcNAc-PP-undecaprenol into ManNAc-GlcNAc-PP-undecaprenol, the first committed lipid intermediate in the de novo synthesis of teichoic acid. The sequence is that of N-acetylglucosaminyldiphosphoundecaprenol N-acetyl-beta-D-mannosaminyltransferase from Bacillus subtilis (strain 168).